The primary structure comprises 742 residues: ATP-dependent RNA helicase DBP7 (742 aa).

The tract at residues 45–100 is disordered; that stretch reads GKTVSRKRKANTTGDEGIIPGRGENSIKKLHKESSYSSEEQEKYKGRNAHNTQGRT. The Q motif signature appears at 143–172; the sequence is DQFASLGVTSLLVSHLEQKMRIKKPTSIQK. The Helicase ATP-binding domain maps to 178 to 372; it reads IIGNAGKNDF…NVALKDYKLI (195 aa). 191–198 contributes to the ATP binding site; the sequence is AQTGSGKT. The short motif at 307 to 310 is the DEAD box element; the sequence is DEGD. The region spanning 405-605 is the Helicase C-terminal domain; it reads TLAATLNNIT…ILMPAFKDVN (201 aa). The disordered stretch occupies residues 701-726; that stretch reads AMGLQSSKDGNSEKKPTKENSKNKMF. Residues 710-722 are compositionally biased toward basic and acidic residues; the sequence is GNSEKKPTKENSK.

It belongs to the DEAD box helicase family. DDX31/DBP7 subfamily.

Its subcellular location is the nucleus. The protein resides in the nucleolus. It carries out the reaction ATP + H2O = ADP + phosphate + H(+). In terms of biological role, ATP-binding RNA helicase involved in the biogenesis of 60S ribosomal subunits and is required for the normal formation of 25S and 5.8S rRNAs. The chain is ATP-dependent RNA helicase DBP7 (DBP7) from Saccharomyces cerevisiae (strain YJM789) (Baker's yeast).